The chain runs to 164 residues: Cytochrome c-type biogenesis protein CcmE (164 aa).

At 1–8 (MNPRRKQR) the chain is on the cytoplasmic side. Residues 9 to 29 (LAVVGIIGFLIVSAVGLMLYA) traverse the membrane as a helical; Signal-anchor for type II membrane protein segment. Over 30-164 (LNDSIDLFYT…YESSNGAGSK (135 aa)) the chain is Periplasmic. The heme site is built by histidine 128 and tyrosine 132. The segment at 142-164 (KGIKHVKPENMPTYESSNGAGSK) is disordered. Positions 154 to 164 (TYESSNGAGSK) are enriched in polar residues.

It belongs to the CcmE/CycJ family.

The protein localises to the cell inner membrane. Its function is as follows. Heme chaperone required for the biogenesis of c-type cytochromes. Transiently binds heme delivered by CcmC and transfers the heme to apo-cytochromes in a process facilitated by CcmF and CcmH. The protein is Cytochrome c-type biogenesis protein CcmE of Alteromonas mediterranea (strain DSM 17117 / CIP 110805 / LMG 28347 / Deep ecotype).